The sequence spans 640 residues: Chaperone protein DnaK (640 aa).

Position 198 is a phosphothreonine; by autocatalysis (Thr-198). The disordered stretch occupies residues 600–640 (KTQGAGAEGGEQPHGEQEAGGAAKGEKVVDADFEEVKDDKK). A compositionally biased stretch (acidic residues) spans 630–640 (ADFEEVKDDKK).

Belongs to the heat shock protein 70 family.

Its function is as follows. Acts as a chaperone. The chain is Chaperone protein DnaK from Citrifermentans bemidjiense (strain ATCC BAA-1014 / DSM 16622 / JCM 12645 / Bem) (Geobacter bemidjiensis).